The following is a 340-amino-acid chain: Mitochondrial carrier protein CoAc1 (340 aa).

Transmembrane regions (helical) follow at residues 22 to 42 (ALDL…AGAF), 85 to 105 (FYKG…LHYM), 130 to 147 (LLAG…TYPL), 199 to 219 (GVGP…YIYE), 237 to 257 (LSCG…LDVV), and 297 to 317 (FAGL…GFTT). 3 Solcar repeats span residues 27 to 113 (PVYA…YRCW), 124 to 224 (TGPV…LKSQ), and 231 to 324 (DSVI…MKAL).

It belongs to the mitochondrial carrier (TC 2.A.29) family. As to expression, expressed throughout the plant.

The protein resides in the mitochondrion inner membrane. Its function is as follows. Required for the accumulation of coenzyme A in the mitochondrial matrix. This Zea mays (Maize) protein is Mitochondrial carrier protein CoAc1.